The primary structure comprises 115 residues: Large ribosomal subunit protein bL20c (115 aa).

This sequence belongs to the bacterial ribosomal protein bL20 family.

The protein localises to the plastid. It localises to the chloroplast. In terms of biological role, binds directly to 23S ribosomal RNA and is necessary for the in vitro assembly process of the 50S ribosomal subunit. It is not involved in the protein synthesizing functions of that subunit. The protein is Large ribosomal subunit protein bL20c (rpl20) of Cyanidium caldarium (Red alga).